Reading from the N-terminus, the 217-residue chain is Ribulose-phosphate 3-epimerase (217 aa).

A substrate-binding site is contributed by serine 6. Residues histidine 29, aspartate 31, and histidine 62 each contribute to the a divalent metal cation site. Aspartate 31 serves as the catalytic Proton acceptor. Residues histidine 62, 138–141 (GFGG), 171–173 (DGG), and 193–194 (GS) contribute to the substrate site. A divalent metal cation is bound at residue aspartate 171. The Proton donor role is filled by aspartate 171.

It belongs to the ribulose-phosphate 3-epimerase family. A divalent metal cation is required as a cofactor.

The enzyme catalyses D-ribulose 5-phosphate = D-xylulose 5-phosphate. The protein operates within carbohydrate degradation. Catalyzes the reversible epimerization of D-ribulose 5-phosphate to D-xylulose 5-phosphate. The sequence is that of Ribulose-phosphate 3-epimerase from Helicobacter pylori (strain J99 / ATCC 700824) (Campylobacter pylori J99).